Consider the following 556-residue polypeptide: Formate--tetrahydrofolate ligase 1 (556 aa).

65-72 (TPAGEGKS) lines the ATP pocket.

This sequence belongs to the formate--tetrahydrofolate ligase family.

It carries out the reaction (6S)-5,6,7,8-tetrahydrofolate + formate + ATP = (6R)-10-formyltetrahydrofolate + ADP + phosphate. The protein operates within one-carbon metabolism; tetrahydrofolate interconversion. In Streptococcus pyogenes serotype M2 (strain MGAS10270), this protein is Formate--tetrahydrofolate ligase 1.